Reading from the N-terminus, the 86-residue chain is UPF0125 protein bbp_234 (86 aa).

The protein belongs to the UPF0125 (RnfH) family.

The chain is UPF0125 protein bbp_234 from Buchnera aphidicola subsp. Baizongia pistaciae (strain Bp).